Here is a 73-residue protein sequence, read N- to C-terminus: Putative neurotoxin NaH-Cpp1a (73 aa).

Residues Met-1–Ser-23 form the signal peptide. 3 disulfide bridges follow: Cys-43-Cys-58, Cys-50-Cys-63, and Cys-57-Cys-70.

As to expression, expressed outside of acontia.

It is found in the secreted. Its subcellular location is the nematocyst. In terms of biological role, putative neurotoxin. This Calliactis polypus (Hermit crab anemone) protein is Putative neurotoxin NaH-Cpp1a.